Here is a 234-residue protein sequence, read N- to C-terminus: Leucyl/phenylalanyl-tRNA--protein transferase (234 aa).

Belongs to the L/F-transferase family.

It is found in the cytoplasm. The enzyme catalyses N-terminal L-lysyl-[protein] + L-leucyl-tRNA(Leu) = N-terminal L-leucyl-L-lysyl-[protein] + tRNA(Leu) + H(+). It carries out the reaction N-terminal L-arginyl-[protein] + L-leucyl-tRNA(Leu) = N-terminal L-leucyl-L-arginyl-[protein] + tRNA(Leu) + H(+). The catalysed reaction is L-phenylalanyl-tRNA(Phe) + an N-terminal L-alpha-aminoacyl-[protein] = an N-terminal L-phenylalanyl-L-alpha-aminoacyl-[protein] + tRNA(Phe). Its function is as follows. Functions in the N-end rule pathway of protein degradation where it conjugates Leu, Phe and, less efficiently, Met from aminoacyl-tRNAs to the N-termini of proteins containing an N-terminal arginine or lysine. The chain is Leucyl/phenylalanyl-tRNA--protein transferase from Nitrosomonas eutropha (strain DSM 101675 / C91 / Nm57).